Here is a 179-residue protein sequence, read N- to C-terminus: Large ribosomal subunit protein uL5 (179 aa).

The protein belongs to the universal ribosomal protein uL5 family. As to quaternary structure, part of the 50S ribosomal subunit; part of the 5S rRNA/L5/L18/L25 subcomplex. Contacts the 5S rRNA and the P site tRNA. Forms a bridge to the 30S subunit in the 70S ribosome.

In terms of biological role, this is one of the proteins that bind and probably mediate the attachment of the 5S RNA into the large ribosomal subunit, where it forms part of the central protuberance. In the 70S ribosome it contacts protein S13 of the 30S subunit (bridge B1b), connecting the 2 subunits; this bridge is implicated in subunit movement. Contacts the P site tRNA; the 5S rRNA and some of its associated proteins might help stabilize positioning of ribosome-bound tRNAs. This chain is Large ribosomal subunit protein uL5, found in Lawsonia intracellularis (strain PHE/MN1-00).